The following is a 514-amino-acid chain: MAVWLAQWLGPLLLVSLWGLLAPASLLRRLGEHIQQFQESSAQGLGLSLGPGAAALPKVGWLEQLLDPFNVSDRRSFLQRYWVNDQHWVGQDGPIFLHLGGEGSLGPGSVMRGHPAALAPAWGALVISLEHRFYGLSIPAGGLEMAQLRFLSSRLALADVVSARLALSRLFNISSSSPWICFGGSYAGSLAAWARLKFPHLIFASVASSAPVRAVLDFSEYNDVVSRSLMSTAIGGSLECRAAVSVAFAEVERRLRSGGAAQAALRTELSACGPLGRAENQAELLGALQALVGGVVQYDGQTGAPLSVRQLCGLLLGGGGNRSHSTPYCGLRRAVQIVLHSLGQKCLSFSRAETVAQLRSTEPQLSGVGDRQWLYQTCTEFGFYVTCENPRCPFSQLPALPSQLDLCEQVFGLSALSVAQAVAQTNSYYGGQTPGANKVLFVNGDTDPWHVLSVTQALGSSESTLLIRTGSHCLDMAPERPSDSPSLRLGRQNIFQQLQTWLKLAKESQIKGEV.

Residues Met1–Ala24 form the signal peptide. N-linked (GlcNAc...) asparagine glycans are attached at residues Asn70 and Asn172. Ser185 (charge relay system) is an active-site residue. N-linked (GlcNAc...) asparagine glycosylation is present at Asn321. Active-site charge relay system residues include Asp447 and His472.

It belongs to the peptidase S28 family. As to expression, expressed predominantly in cortical thymic epithelial cells.

It localises to the cytoplasmic vesicle. Protease that may play a role in T-cell development. The polypeptide is Thymus-specific serine protease (PRSS16) (Homo sapiens (Human)).